The following is a 236-amino-acid chain: Small ribosomal subunit protein uS2c (236 aa).

It belongs to the universal ribosomal protein uS2 family.

The protein localises to the plastid. It is found in the chloroplast. This is Small ribosomal subunit protein uS2c (rps2) from Liriodendron tulipifera (Tuliptree).